The primary structure comprises 334 residues: Glycerol-3-phosphate dehydrogenase [NAD(P)+] 2 (334 aa).

NADPH is bound by residues Trp-16, Arg-36, Arg-37, and Lys-110. Residues Lys-110 and Gly-140 each coordinate sn-glycerol 3-phosphate. An NADPH-binding site is contributed by Ala-144. Sn-glycerol 3-phosphate contacts are provided by Lys-195, Asp-248, Ser-258, Arg-259, and Asn-260. Lys-195 (proton acceptor) is an active-site residue. Position 259 (Arg-259) interacts with NADPH. NADPH is bound by residues Val-282 and Glu-284.

It belongs to the NAD-dependent glycerol-3-phosphate dehydrogenase family.

The protein resides in the cytoplasm. It carries out the reaction sn-glycerol 3-phosphate + NAD(+) = dihydroxyacetone phosphate + NADH + H(+). It catalyses the reaction sn-glycerol 3-phosphate + NADP(+) = dihydroxyacetone phosphate + NADPH + H(+). It functions in the pathway membrane lipid metabolism; glycerophospholipid metabolism. Its function is as follows. Catalyzes the reduction of the glycolytic intermediate dihydroxyacetone phosphate (DHAP) to sn-glycerol 3-phosphate (G3P), the key precursor for phospholipid synthesis. The sequence is that of Glycerol-3-phosphate dehydrogenase [NAD(P)+] 2 from Mycobacterium tuberculosis (strain ATCC 25618 / H37Rv).